The chain runs to 342 residues: Uroporphyrinogen decarboxylase (342 aa).

Substrate-binding positions include 21–25, Asp71, Tyr148, Ser203, and His316; that span reads RQAGR.

The protein belongs to the uroporphyrinogen decarboxylase family. In terms of assembly, homodimer.

It localises to the cytoplasm. It carries out the reaction uroporphyrinogen III + 4 H(+) = coproporphyrinogen III + 4 CO2. The protein operates within porphyrin-containing compound metabolism; protoporphyrin-IX biosynthesis; coproporphyrinogen-III from 5-aminolevulinate: step 4/4. In terms of biological role, catalyzes the decarboxylation of four acetate groups of uroporphyrinogen-III to yield coproporphyrinogen-III. The protein is Uroporphyrinogen decarboxylase of Campylobacter curvus (strain 525.92).